Reading from the N-terminus, the 546-residue chain is Carboxylic ester hydrolase FVEG_12634 (546 aa).

The tract at residues 72–91 (FTDGTKICPQPPSSNTPDPS) is disordered. S214 functions as the Acyl-ester intermediate in the catalytic mechanism.

This sequence belongs to the type-B carboxylesterase/lipase family.

The enzyme catalyses a carboxylic ester + H2O = an alcohol + a carboxylate + H(+). Carboxylic ester hydrolase; part of the Fusarium detoxification of benzoxazolinone cluster 2 (FDB2) involved in the degradation of benzoxazolinones produced by the host plant. Maize, wheat, and rye produce the 2 benzoxazinone phytoanticipins 2,4-dihy-droxy-7-methoxy-1,4-benzoxazin-3-one (DIMBOA) and 2,4-dihydroxy-1,4-benzoxazin-3-one (DIBOA) that, due to their inherent instability once released, spontaneously degrade to the more stable corresponding benzoxazolinones, 6-methoxy-2-benzoxazolinone (MBOA) and 2-benzoxazolinone (BOA), respectively. The first step in the detoxification of benzoxazolinones involves the hydrolysis of the cyclic ester bond of benzoxazolinones by the FDB1 cluster gamma-lactamase MBL1 to aminophenols. MBL1 is able to convert BOA into 2-aminophenol (2-AP), as well as MBOA into 5-methoxy-2-aminophenol (2-AMP). The FDB2 cluster N-malonyltransferase FDB2/NAT1 then metabolizes aminophenols via N-malonylation to non-toxic malonamic acids. FDB2/NAT1 converts 2-AP into N-(2-hydroxyphenyl) malonamic acid (HPMA) and 2-AMP into N-(2-hydroxy-4-methoxyphenyl) malonamic acid (HMPMA). The duplicated dienlactone hydrolases DLH1 and DLH2 may provide redundant function for hydrolyzing the lactone moiety in the BOA molecule. The roles of the amidases an other enzymes encoded by the 2 FDB clusters have not been identified so far. The polypeptide is Carboxylic ester hydrolase FVEG_12634 (Gibberella moniliformis (strain M3125 / FGSC 7600) (Maize ear and stalk rot fungus)).